The following is a 270-amino-acid chain: Sulfur carrier protein FdhD (270 aa).

Cysteine 116 (cysteine persulfide intermediate) is an active-site residue. Phenylalanine 253 to lysine 258 lines the Mo-bis(molybdopterin guanine dinucleotide) pocket.

Belongs to the FdhD family.

The protein localises to the cytoplasm. Its function is as follows. Required for formate dehydrogenase (FDH) activity. Acts as a sulfur carrier protein that transfers sulfur from IscS to the molybdenum cofactor prior to its insertion into FDH. In Haemophilus influenzae (strain ATCC 51907 / DSM 11121 / KW20 / Rd), this protein is Sulfur carrier protein FdhD.